The chain runs to 367 residues: MVKYGVVGTGYFGAELARYMQKNDGAEITLLYDPDNAEAIAEELGAKVASSLDELVSSDEVDCVIVATPNNLHKEPVIKAAQHGKNVFCEKPIALSYQDCREMVDACKENNVTFMAGHIMNFFNGVHHAKELINQGVIGDVLYCHTARNGWEEQQPSVSWKKIREKSGGHLYHHIHELDCVQFLMGGMPETVTMTGGNVAHEGEHFGDEDDMIFVNMEFSNKRFALLEWGSAYRWGEHYVLIQGSKGAIRLDLFNCKGTLKLDGQESYFLIHESQEEDDDRTRIYHSTEMDGAIAYGKPGKRTPLWLSSVIDKEMRYLHEIMEGAPVSEEFAKLLTGEAALEAIATADACTQSMFEDRKVKLSEIVK.

The protein belongs to the Gfo/Idh/MocA family.

This is an uncharacterized protein from Streptococcus pneumoniae serotype 4 (strain ATCC BAA-334 / TIGR4).